The following is a 365-amino-acid chain: Phosphatidylcholine:ceramide cholinephosphotransferase 4 (365 aa).

The Cytoplasmic portion of the chain corresponds to Met-1 to Gln-44. Residues Val-45 to Ile-65 form a helical membrane-spanning segment. The Lumenal segment spans residues Thr-66 to Gly-92. The chain crosses the membrane as a helical span at residues Met-93–Phe-113. Residues Lys-114–Arg-165 lie on the Cytoplasmic side of the membrane. Residues Phe-166 to Leu-186 form a helical membrane-spanning segment. Residues Pro-187–Thr-229 lie on the Lumenal side of the membrane. His-228 is a catalytic residue. A helical membrane pass occupies residues Val-230–Phe-250. Position 251 (Arg-251) is a topological domain, cytoplasmic. Residues Pro-252–Tyr-272 form a helical membrane-spanning segment. Residues His-271 and Asp-275 contribute to the active site. Topologically, residues Thr-273–Asp-275 are lumenal. Residues Val-276–Gly-296 traverse the membrane as a helical segment. Topologically, residues Ala-297–Val-365 are cytoplasmic.

Belongs to the sphingomyelin synthase family.

The protein localises to the golgi apparatus membrane. It catalyses the reaction an N-acylsphing-4-enine + a 1,2-diacyl-sn-glycero-3-phosphocholine = a sphingomyelin + a 1,2-diacyl-sn-glycerol. Its function is as follows. Bidirectional lipid cholinephosphotransferase capable of converting phosphatidylcholine (PC) and ceramide to sphingomyelin (SM) and diacylglycerol (DAG) and vice versa. Direction is dependent on the relative concentrations of DAG and ceramide as phosphocholine acceptors. Directly and specifically recognizes the choline head group on the substrate. Also requires two fatty chains on the choline-P donor molecule in order to be recognized efficiently as a substrate. Does not function strictly as a SM synthase. Essential for viability of the pathogenic bloodstream stage of this human protozoan parasite and, consequently, can be considered as potential drug target. In Trypanosoma brucei brucei (strain 927/4 GUTat10.1), this protein is Phosphatidylcholine:ceramide cholinephosphotransferase 4.